Here is a 409-residue protein sequence, read N- to C-terminus: LL-diaminopimelate aminotransferase (409 aa).

Residues Tyr15 and Gly42 each coordinate substrate. Residues Tyr72, 108-109 (AK), Tyr132, Asn186, Tyr217, and 245-247 (SFS) each bind pyridoxal 5'-phosphate. Positions 109, 132, and 186 each coordinate substrate. N6-(pyridoxal phosphate)lysine is present on Lys248. 2 residues coordinate pyridoxal 5'-phosphate: Arg256 and Asn291. 2 residues coordinate substrate: Asn291 and Arg385.

It belongs to the class-I pyridoxal-phosphate-dependent aminotransferase family. LL-diaminopimelate aminotransferase subfamily. Homodimer. The cofactor is pyridoxal 5'-phosphate.

The catalysed reaction is (2S,6S)-2,6-diaminopimelate + 2-oxoglutarate = (S)-2,3,4,5-tetrahydrodipicolinate + L-glutamate + H2O + H(+). It participates in amino-acid biosynthesis; L-lysine biosynthesis via DAP pathway; LL-2,6-diaminopimelate from (S)-tetrahydrodipicolinate (aminotransferase route): step 1/1. In terms of biological role, involved in the synthesis of meso-diaminopimelate (m-DAP or DL-DAP), required for both lysine and peptidoglycan biosynthesis. Catalyzes the direct conversion of tetrahydrodipicolinate to LL-diaminopimelate. This is LL-diaminopimelate aminotransferase from Desulfosudis oleivorans (strain DSM 6200 / JCM 39069 / Hxd3) (Desulfococcus oleovorans).